A 568-amino-acid chain; its full sequence is Proline--tRNA ligase (568 aa).

The protein belongs to the class-II aminoacyl-tRNA synthetase family. ProS type 1 subfamily. In terms of assembly, homodimer.

It is found in the cytoplasm. The catalysed reaction is tRNA(Pro) + L-proline + ATP = L-prolyl-tRNA(Pro) + AMP + diphosphate. Functionally, catalyzes the attachment of proline to tRNA(Pro) in a two-step reaction: proline is first activated by ATP to form Pro-AMP and then transferred to the acceptor end of tRNA(Pro). As ProRS can inadvertently accommodate and process non-cognate amino acids such as alanine and cysteine, to avoid such errors it has two additional distinct editing activities against alanine. One activity is designated as 'pretransfer' editing and involves the tRNA(Pro)-independent hydrolysis of activated Ala-AMP. The other activity is designated 'posttransfer' editing and involves deacylation of mischarged Ala-tRNA(Pro). The misacylated Cys-tRNA(Pro) is not edited by ProRS. This Halothermothrix orenii (strain H 168 / OCM 544 / DSM 9562) protein is Proline--tRNA ligase.